The chain runs to 493 residues: Trichothecene 8-O-acetyltransferase (493 aa).

Residues Q180 to K191 show a composition bias toward polar residues. The disordered stretch occupies residues Q180–P199.

It functions in the pathway sesquiterpene biosynthesis; trichothecene biosynthesis. Trichothecene 8-O-acetyltransferase; part of 2-gene cluster involved in trichothecene C-8 modification that mediates the biosynthesis of T2-toxin. The biosynthesis of trichothecenes begins with the cyclization of farnesyl diphosphate to trichodiene and is catalyzed by the trichodiene synthase TRI5. Trichodiene undergoes a series of oxygenations catalyzed by the cytochrome P450 monooxygenase TRI4. TRI4 controls the addition of four oxygens at C-2, C-3, C-11, and the C-12, C-13-epoxide to form the intermediate isotrichotriol. Isotrichotriol then undergoes a non-enzymatic isomerization and cyclization to form isotrichodermol. During this process, the oxygen at the C-2 position becomes the pyran ring oxygen and the hydroxyl group at C-11 is lost. More complex type A trichothecenes are built by modifying isotrichodermol through a series of paired hydroxylation and acetylation or acylation steps. Isotrichodermol is converted to isotrichodermin by the acetyltransferase TRI101. TRI101 encodes a C-3 transacetylase that acts as a self-protection or resistance factor during biosynthesis and that the presence of a free C-3 hydroxyl group is a key component of Fusarium trichothecene phytotoxicity. A second hydroxyl group is added to C-15 by the trichothecene C-15 hydroxylase TRI11, producing 15-decalonectrin, which is then acetylated by TRI3, producing calonectrin. A third hydroxyl group is added at C-4 by the cytochrome P450 monooxygenase TRI13, converting calonectrin to 3,15-diacetoxyspirpenol, which is subsequently acetylated bythe acetyltransferase TRI7. A fourth hydroxyl group is added to C-8 by the cytochrome P450 monooxygenase TRI1, followed by the addition of an isovaleryl moiety by TRI16. Finally, the acetyl group is removed from the C-3 position by the trichothecene C-3 esterase TRI8 to produce T-2 toxin. The protein is Trichothecene 8-O-acetyltransferase of Fusarium sporotrichioides.